The following is a 712-amino-acid chain: Polyribonucleotide nucleotidyltransferase (712 aa).

Mg(2+) is bound by residues aspartate 484 and aspartate 490. The KH domain maps to 551 to 610 (PKVFTIQIHPDKIRDIIGPGGKVIRAIQAETGTRVDVDDSGLVKVSAVNLEEGEAALQMI). Positions 620–688 (GAVYEGTVVK…KDGKIRLSRK (69 aa)) constitute an S1 motif domain. The interval 689–712 (ALLEEENGKSGPENGAPQRDKNRH) is disordered.

The protein belongs to the polyribonucleotide nucleotidyltransferase family. Mg(2+) serves as cofactor.

The protein resides in the cytoplasm. It catalyses the reaction RNA(n+1) + phosphate = RNA(n) + a ribonucleoside 5'-diphosphate. In terms of biological role, involved in mRNA degradation. Catalyzes the phosphorolysis of single-stranded polyribonucleotides processively in the 3'- to 5'-direction. This is Polyribonucleotide nucleotidyltransferase from Desulfatibacillum aliphaticivorans.